Reading from the N-terminus, the 311-residue chain is Probable dihydroorotate dehydrogenase A (fumarate) (311 aa).

Substrate-binding positions include lysine 45, asparagine 69–leucine 73, and asparagine 128. Lysine 45 to threonine 46 serves as a coordination point for FMN. Asparagine 128 is a binding site for FMN. The active-site Nucleophile is the cysteine 131. FMN-binding residues include lysine 165 and valine 193. Asparagine 194 to serine 195 lines the substrate pocket. Residues glycine 220, glycine 248–glycine 249, and glycine 270–threonine 271 contribute to the FMN site.

It belongs to the dihydroorotate dehydrogenase family. Type 1 subfamily. In terms of assembly, homodimer. Requires FMN as cofactor.

Its subcellular location is the cytoplasm. The enzyme catalyses (S)-dihydroorotate + fumarate = orotate + succinate. Its pathway is pyrimidine metabolism; UMP biosynthesis via de novo pathway. Functionally, catalyzes the conversion of dihydroorotate to orotate with fumarate as the electron acceptor. This chain is Probable dihydroorotate dehydrogenase A (fumarate) (pyrDA), found in Streptococcus pneumoniae (strain ATCC BAA-255 / R6).